Consider the following 569-residue polypeptide: Mitogen-activated protein kinase 8 (569 aa).

The region spanning 13-304 (YKIQEVIGKG…AEEALADPYF (292 aa)) is the Protein kinase domain. ATP-binding positions include 19-27 (IGKGSYGVV) and Lys42. Asp139 serves as the catalytic Proton acceptor. Thr175 bears the Phosphothreonine mark. A TXY motif is present at residues 175–177 (TDY). Position 177 is a phosphotyrosine (Tyr177). The interval 404–432 (TTVHSAPIPPKDHQNITSQVPQRIPGRTG) is disordered.

This sequence belongs to the protein kinase superfamily. CMGC Ser/Thr protein kinase family. MAP kinase subfamily. Post-translationally, dually phosphorylated on Thr-175 and Tyr-177, which activates the enzyme. Expressed in leaves and panicles.

It carries out the reaction L-seryl-[protein] + ATP = O-phospho-L-seryl-[protein] + ADP + H(+). The enzyme catalyses L-threonyl-[protein] + ATP = O-phospho-L-threonyl-[protein] + ADP + H(+). Activated by threonine and tyrosine phosphorylation. This is Mitogen-activated protein kinase 8 (MPK8) from Oryza sativa subsp. japonica (Rice).